A 185-amino-acid polypeptide reads, in one-letter code: Lipid A acyltransferase PagP (185 aa).

The first 14 residues, 1–14 (MKLKPVLYLLMLLG), serve as a signal peptide directing secretion. A lipid anchor (N-palmitoyl cysteine) is attached at C15. The S-diacylglycerol cysteine moiety is linked to residue C15. Residues H57, D100, and S101 contribute to the active site.

The protein belongs to the lipid A palmitoyltransferase family. As to quaternary structure, homodimer.

The protein localises to the cell outer membrane. It carries out the reaction a lipid A + a 1,2-diacyl-sn-glycero-3-phosphocholine = a hepta-acyl lipid A + a 2-acyl-sn-glycero-3-phosphocholine. The enzyme catalyses a lipid IVA + a 1,2-diacyl-sn-glycero-3-phosphocholine = a lipid IVB + a 2-acyl-sn-glycero-3-phosphocholine. The catalysed reaction is a lipid IIA + a 1,2-diacyl-sn-glycero-3-phosphocholine = a lipid IIB + a 2-acyl-sn-glycero-3-phosphocholine. Functionally, transfers a fatty acid residue from the sn-1 position of a phospholipid to the N-linked hydroxyfatty acid chain on the proximal unit of lipid A or its precursors. The protein is Lipid A acyltransferase PagP of Erwinia sp. (strain Ejp617).